A 484-amino-acid polypeptide reads, in one-letter code: Cholesterol 22-hydroxylase CYP90B27 (484 aa).

Residues 2–22 (ALELILVLSSLIVILIIFFSF) traverse the membrane as a helical segment. C429 contributes to the heme binding site.

It belongs to the cytochrome P450 family. As to expression, expressed in roots.

The protein localises to the membrane. The enzyme catalyses cholesterol + reduced [NADPH--hemoprotein reductase] + O2 = (22R)-hydroxycholesterol + oxidized [NADPH--hemoprotein reductase] + H2O + H(+). The protein operates within steroid metabolism; cholesterol metabolism. Its function is as follows. Involved in the biosynthesis of steroidal saponins and alkaloids natural products from cholesterol such as spirostane-type saponins and polyphyllins, compounds with pharmacological activity. Catalyzes the C-22 hydroxylation of cholesterol to form 22R-hydroxycholesterol. This chain is Cholesterol 22-hydroxylase CYP90B27, found in Paris polyphylla (Daiswa polyphylla).